Reading from the N-terminus, the 162-residue chain is uncharacterized protein (162 aa).

The chain crosses the membrane as a helical span at residues Ile5–Ser25.

It is found in the membrane. This is an uncharacterized protein from Methanocaldococcus jannaschii (strain ATCC 43067 / DSM 2661 / JAL-1 / JCM 10045 / NBRC 100440) (Methanococcus jannaschii).